A 217-amino-acid polypeptide reads, in one-letter code: Uracil phosphoribosyltransferase (217 aa).

Residues R84, R109, and 137–145 contribute to the 5-phospho-alpha-D-ribose 1-diphosphate site; that span reads DPMLATGGS. Residues I202 and 207–209 contribute to the uracil site; that span reads GDA. D208 serves as a coordination point for 5-phospho-alpha-D-ribose 1-diphosphate.

The protein belongs to the UPRTase family. The cofactor is Mg(2+).

It carries out the reaction UMP + diphosphate = 5-phospho-alpha-D-ribose 1-diphosphate + uracil. The protein operates within pyrimidine metabolism; UMP biosynthesis via salvage pathway; UMP from uracil: step 1/1. Allosterically activated by GTP. Functionally, catalyzes the conversion of uracil and 5-phospho-alpha-D-ribose 1-diphosphate (PRPP) to UMP and diphosphate. This chain is Uracil phosphoribosyltransferase, found in Synechococcus elongatus (strain ATCC 33912 / PCC 7942 / FACHB-805) (Anacystis nidulans R2).